The primary structure comprises 197 residues: Imidazoleglycerol-phosphate dehydratase (197 aa).

It belongs to the imidazoleglycerol-phosphate dehydratase family.

Its subcellular location is the cytoplasm. It carries out the reaction D-erythro-1-(imidazol-4-yl)glycerol 3-phosphate = 3-(imidazol-4-yl)-2-oxopropyl phosphate + H2O. It functions in the pathway amino-acid biosynthesis; L-histidine biosynthesis; L-histidine from 5-phospho-alpha-D-ribose 1-diphosphate: step 6/9. This is Imidazoleglycerol-phosphate dehydratase from Azotobacter vinelandii (strain DJ / ATCC BAA-1303).